A 610-amino-acid chain; its full sequence is UvrABC system protein C (610 aa).

The GIY-YIG domain occupies 16–94; it reads SQPGVYRMYD…IKLYQPRYNV (79 aa). The UVR domain occupies 204-239; the sequence is DQVLTQLIARMEKASQDLAFEEAARIRDQIQAVRRV.

This sequence belongs to the UvrC family. In terms of assembly, interacts with UvrB in an incision complex.

Its subcellular location is the cytoplasm. Functionally, the UvrABC repair system catalyzes the recognition and processing of DNA lesions. UvrC both incises the 5' and 3' sides of the lesion. The N-terminal half is responsible for the 3' incision and the C-terminal half is responsible for the 5' incision. The polypeptide is UvrABC system protein C (Salmonella paratyphi C (strain RKS4594)).